The sequence spans 398 residues: Lysophosphatidylserine lipase ABHD12 (398 aa).

The span at 1 to 16 (MRKRTEPVALEHERRT) shows a compositional bias: basic and acidic residues. Residues 1–24 (MRKRTEPVALEHERRTASGSPSAG) form a disordered region. The Cytoplasmic portion of the chain corresponds to 1 to 74 (MRKRTEPVAL…RKGLCFRLRK (74 aa)). Residues 75 to 95 (ILFFVLGLYVAIPFLIKLCPG) traverse the membrane as a helical segment. Residues 96–398 (IQAKLIFLNF…LGKSEPGRQH (303 aa)) are Extracellular-facing. N123 is a glycosylation site (N-linked (GlcNAc...) asparagine). The active-site Nucleophile is S246. Catalysis depends on charge relay system residues D333 and H372.

It belongs to the serine esterase family.

It is found in the endoplasmic reticulum membrane. The enzyme catalyses 1-(9Z-octadecenoyl)-sn-glycero-3-phospho-L-serine + H2O = sn-glycero-3-phospho-L-serine + (9Z)-octadecenoate + H(+). It carries out the reaction 1-(9Z-octadecenoyl)-sn-glycero-3-phospho-(1'-sn-glycerol) + H2O = sn-glycero-3-phospho-(1'-sn-glycerol) + (9Z)-octadecenoate + H(+). The catalysed reaction is 1-(9Z-octadecenoyl)-sn-glycero-3-phospho-(1D-myo-inositol) + H2O = sn-glycero-3-phospho-1D-myo-inositol + (9Z)-octadecenoate + H(+). It catalyses the reaction 1-(9Z-octadecenoyl)-sn-glycero-3-phosphoethanolamine + H2O = sn-glycero-3-phosphoethanolamine + (9Z)-octadecenoate + H(+). The enzyme catalyses 1-(9Z-octadecenoyl)-sn-glycero-3-phosphocholine + H2O = 1-(9Z-octadecenoyl)-sn-glycerol + phosphocholine + H(+). It carries out the reaction 2-(9Z-octadecenoyl)-glycerol + H2O = glycerol + (9Z)-octadecenoate + H(+). The catalysed reaction is 1-hexadecanoyl-sn-glycero-3-phospho-L-serine + H2O = sn-glycero-3-phospho-L-serine + hexadecanoate + H(+). It catalyses the reaction 2-(5Z,8Z,11Z,14Z-eicosatetraenoyl)-glycerol + H2O = glycerol + (5Z,8Z,11Z,14Z)-eicosatetraenoate + H(+). The enzyme catalyses Hydrolyzes glycerol monoesters of long-chain fatty acids.. It carries out the reaction 1-decanoylglycerol + H2O = decanoate + glycerol + H(+). The catalysed reaction is 1-dodecanoylglycerol + H2O = dodecanoate + glycerol + H(+). It catalyses the reaction 1-tetradecanoylglycerol + H2O = tetradecanoate + glycerol + H(+). The enzyme catalyses 2-hexadecanoylglycerol + H2O = glycerol + hexadecanoate + H(+). It carries out the reaction 1-(9Z-octadecenoyl)-glycerol + H2O = glycerol + (9Z)-octadecenoate + H(+). The catalysed reaction is 2-(9Z,12Z-octadecadienoyl)-glycerol + H2O = (9Z,12Z)-octadecadienoate + glycerol + H(+). It catalyses the reaction 1-(5Z,8Z,11Z,14Z-eicosatetraenoyl)-glycerol + H2O = glycerol + (5Z,8Z,11Z,14Z)-eicosatetraenoate + H(+). The enzyme catalyses 1-(9Z,12Z-octadecadienoyl)-glycerol + H2O = (9Z,12Z)-octadecadienoate + glycerol + H(+). It carries out the reaction 1-hexadecanoylglycerol + H2O = glycerol + hexadecanoate + H(+). The catalysed reaction is 1-octadecanoylglycerol + H2O = octadecanoate + glycerol + H(+). It catalyses the reaction 1-octadecanoyl-2-(9,10-epoxyoctadecanoyl)-sn-glycero-3-phospho-L-serine + H2O = 9,10-epoxyoctadecanoate + 1-octadecanoyl-sn-glycero-3-phosphoserine + H(+). The enzyme catalyses 1-octadecanoyl-2-(10-hydroxyoctadecanoyl)-sn-glycero-3-phospho-L-serine + H2O = 1-octadecanoyl-sn-glycero-3-phosphoserine + 10-hydroxyoctadecanoate + H(+). It carries out the reaction 1-hexadecanoyl-2-(10-hydroxyoctadecanoyl)-sn-glycero-3-phospho-L-serine + H2O = 10-hydroxyoctadecanoate + 1-hexadecanoyl-sn-glycero-3-phospho-L-serine + H(+). Lysophosphatidylserine (LPS) lipase that mediates the hydrolysis of lysophosphatidylserine, a class of signaling lipids that regulates immunological and neurological processes. Represents a major lysophosphatidylserine lipase in the brain, thereby playing a key role in the central nervous system. Also able to hydrolyze oxidized phosphatidylserine; oxidized phosphatidylserine is produced in response to severe inflammatory stress and constitutes a proapoptotic 'eat me' signal. Also has monoacylglycerol (MAG) lipase activity: hydrolyzes 2-arachidonoylglycerol (2-AG), thereby acting as a regulator of endocannabinoid signaling pathways. Has a strong preference for very-long-chain lipid substrates; substrate specificity is likely due to improved catalysis and not improved substrate binding. This Bos taurus (Bovine) protein is Lysophosphatidylserine lipase ABHD12.